A 261-amino-acid chain; its full sequence is Single-strand annealing weakened protein 1 (261 aa).

In terms of assembly, interacts with MSH2, MSH3, RAD1, RAD10, RAD51 and RAD52.

The protein resides in the nucleus. Its function is as follows. Catalyzes 3'-non-homologous tail removal of RAD1/RAD10-dependent single-strand annealing recombination intermediates. Plays a key role in targeting RAD1/RAD10 complex to 3'-flap cleavage substrate in recombination. Also contributes to the integrity of ribosomal DNA arrays. The polypeptide is Single-strand annealing weakened protein 1 (SAW1) (Saccharomyces cerevisiae (strain ATCC 204508 / S288c) (Baker's yeast)).